We begin with the raw amino-acid sequence, 109 residues long: MLEPLQILSICSFILSALHFMAWTIGHLNQIKRGVNLKIQIRNPNKEAINREVSILRHNYQKEIQAKETMKKILSDNMEVLGDHIVVEGLSTDEIIKMGETVLEVEELQ.

Residues 1 to 4 (MLEP) lie on the Virion surface side of the membrane. Residues 5–27 (LQILSICSFILSALHFMAWTIGH) form a helical; Signal-anchor for type III membrane protein membrane-spanning segment. The Intravirion portion of the chain corresponds to 28 to 109 (LNQIKRGVNL…ETVLEVEELQ (82 aa)). A coiled-coil region spans residues 58-81 (HNYQKEIQAKETMKKILSDNMEVL).

Homotetramer. Post-translationally, phosphorylated by host.

The protein localises to the virion membrane. It localises to the host cell membrane. Forms presumably a highly low-pH gated proton-selective channel. Trp-23 may function as a minimalistic gate that opens and closes the pore. When the environmental pH is lower than a threshold, the BM2 channel would be activated and selectively transport protons across the membrane from the extracellular side to the cytoplasmic side. Crucial for the uncoating process. When the virion is internalized into the endosome, the channel acidifies the virion's interior, promoting the dissociation of matrix protein 1 (M1) from the ribonucleoprotein (RNP) thus allowing the transport of the RNP from the virion into the cell's nucleus. Also plays a role in viral protein secretory pathway. Elevates the intravesicular pH of normally acidic compartments, such as trans-Golgi network, preventing newly formed hemagglutinin from premature switching to the fusion-active conformation. Plays a crucial role in virion assembly. Expressed in the late phase of the infection. The sequence is that of Matrix protein 2 (M) from Homo sapiens (Human).